The following is a 426-amino-acid chain: Glutamate-1-semialdehyde 2,1-aminomutase (426 aa).

N6-(pyridoxal phosphate)lysine is present on lysine 265.

Belongs to the class-III pyridoxal-phosphate-dependent aminotransferase family. HemL subfamily. Homodimer. Requires pyridoxal 5'-phosphate as cofactor.

It localises to the cytoplasm. The enzyme catalyses (S)-4-amino-5-oxopentanoate = 5-aminolevulinate. It functions in the pathway porphyrin-containing compound metabolism; protoporphyrin-IX biosynthesis; 5-aminolevulinate from L-glutamyl-tRNA(Glu): step 2/2. This chain is Glutamate-1-semialdehyde 2,1-aminomutase, found in Akkermansia muciniphila (strain ATCC BAA-835 / DSM 22959 / JCM 33894 / BCRC 81048 / CCUG 64013 / CIP 107961 / Muc).